The chain runs to 116 residues: Large ribosomal subunit protein uL18 (116 aa).

Belongs to the universal ribosomal protein uL18 family. Part of the 50S ribosomal subunit; part of the 5S rRNA/L5/L18/L25 subcomplex. Contacts the 5S and 23S rRNAs.

Functionally, this is one of the proteins that bind and probably mediate the attachment of the 5S RNA into the large ribosomal subunit, where it forms part of the central protuberance. In Mycoplasma pneumoniae (strain ATCC 29342 / M129 / Subtype 1) (Mycoplasmoides pneumoniae), this protein is Large ribosomal subunit protein uL18.